The following is a 315-amino-acid chain: Capsid protein (315 aa).

Residues methionine 1–glutamate 60 are disordered. The segment covering threonine 29–glutamate 47 has biased composition (basic and acidic residues).

The protein belongs to the potexviruses coat protein family.

It localises to the virion. In terms of biological role, required for genome encapsidation. Forms ribonucleoprotein complexes along with TGB1 helicase and viral RNA. This chain is Capsid protein, found in Chrysanthemum morifolium (Florist's daisy).